A 147-amino-acid polypeptide reads, in one-letter code: Ubiquitin-conjugating enzyme E2 D2 (147 aa).

Residues 1 to 147 (MALKRIHKEL…AREWTQKYAM (147 aa)) form the UBC core domain. The active-site Glycyl thioester intermediate is cysteine 85.

Belongs to the ubiquitin-conjugating enzyme family. Interacts with SCF (SKP1-CUL1-F-box protein) E3 ubiquitin ligase complex. Interacts with CNOT4 (via RING domain). Interacts with E3 ubiquitin-protein ligases CBLC, PJA1 and PJA2. Interacts with PDZRN3. Interacts with PPP1R11. Interacts with E3 ubiquitin-protein ligase PHF7; the interaction inhibits cleavage of PHF7 and promotes association of the complex with the nucleosome core particle.

The enzyme catalyses S-ubiquitinyl-[E1 ubiquitin-activating enzyme]-L-cysteine + [E2 ubiquitin-conjugating enzyme]-L-cysteine = [E1 ubiquitin-activating enzyme]-L-cysteine + S-ubiquitinyl-[E2 ubiquitin-conjugating enzyme]-L-cysteine.. The catalysed reaction is S-ubiquitinyl-[E1 ubiquitin-activating enzyme]-L-cysteine + [acceptor protein]-L-lysine = [E1 ubiquitin-activating enzyme]-L-cysteine + N(6)-monoubiquitinyl-[acceptor protein]-L-lysine.. Its pathway is protein modification; protein ubiquitination. In terms of biological role, accepts ubiquitin from the E1 complex and catalyzes its covalent attachment to other proteins. In vitro catalyzes 'Lys-48'-linked polyubiquitination. Mediates the selective degradation of short-lived and abnormal proteins. Functions in the E6/E6-AP-induced ubiquitination of p53/TP53. Mediates ubiquitination of PEX5 and SQSTM1 and autoubiquitination of STUB1 and TRAF6. Involved in the signal-induced conjugation and subsequent degradation of NFKBIA, FBXW2-mediated GCM1 ubiquitination and degradation, MDM2-dependent degradation of p53/TP53 and the activation of MAVS in the mitochondria by RIGI in response to viral infection. Essential for viral activation of IRF3. The polypeptide is Ubiquitin-conjugating enzyme E2 D2 (UBE2D2) (Bos taurus (Bovine)).